Here is a 92-residue protein sequence, read N- to C-terminus: Small ribosomal subunit protein uS19 (92 aa).

This sequence belongs to the universal ribosomal protein uS19 family.

Functionally, protein S19 forms a complex with S13 that binds strongly to the 16S ribosomal RNA. This is Small ribosomal subunit protein uS19 from Caulobacter sp. (strain K31).